Here is a 469-residue protein sequence, read N- to C-terminus: Acyltransferase clz18 (469 aa).

Transmembrane regions (helical) follow at residues 21-41 (GLLSIIIFNAHLTPVIILGYD), 70-90 (LFTIPILKLVYSASPAVCLFF), 134-154 (LSLLAMASMIVPFALMKTGFF), 253-273 (ILAALAVLGVAVGSLECPLFW), 346-366 (GLIVPPRTWHSLGAVLVLYSL), 391-411 (IYLIHFCLVISFGPDLFSWVW), and 424-444 (VGFGITYSILFMAVLLTAAIF).

Belongs to the acyltransferase 3 family.

It is found in the membrane. The protein operates within secondary metabolite biosynthesis. In terms of biological role, acyltransferase; part of the gene cluster that mediates the biosynthesis of squalestatin S1 (SQS1, also known as zaragozic acid A), a heavily oxidized fungal polyketide that offers potent cholesterol lowering activity by targeting squalene synthase (SS). SQS1 is composed of a 2,8-dioxobicyclic[3.2.1]octane-3,4,5-tricarboxyclic acid core that is connected to two lipophilic polyketide arms. These initial steps feature the priming of an unusual benzoic acid starter unit onto the highly reducing polyketide synthase clz14, followed by oxaloacetate extension and product release to generate a tricarboxylic acid containing product. The phenylalanine ammonia lyase (PAL) clz10 and the acyl-CoA ligase clz12 are involved in transforming phenylalanine into benzoyl-CoA. The citrate synthase-like protein clz17 is involved in connecting the C-alpha-carbons of the hexaketide chain and oxaloacetate to afford the tricarboxylic acid unit. The potential hydrolytic enzymes, clz11 and clz13, are in close proximity to pks2 and may participate in product release. On the other side, the tetraketide arm is synthesized by a the squalestatin tetraketide synthase clz2 and enzymatically esterified to the core in the last biosynthetic step, by the acetyltransferase clz6. The biosynthesis of the tetraketide must involve 3 rounds of chain extension. After the first and second rounds methyl-transfer occurs, and in all rounds of extension the ketoreductase and dehydratase are active. The enoyl reductase and C-MeT of clz2 are not active in the final round of extension. The acetyltransferase clz6 appears to have a broad substrate selectivity for its acyl CoA substrate, allowing the in vitro synthesis of novel squalestatins. The biosynthesis of SQS1 requires several oxidative steps likely performed by oxidoreductases clz3, clz15 and clz16. Finally, in support of the identification of the cluster as being responsible for SQS1 production, the cluster contains a gene encoding a putative squalene synthase (SS) clz20, suggesting a likely mechanism for self-resistance. This is Acyltransferase clz18 from Cochliobolus lunatus (Filamentous fungus).